The chain runs to 561 residues: Arginine--tRNA ligase (561 aa).

The 'HIGH' region signature appears at 129–139 (ANPTGPLHVGH).

This sequence belongs to the class-I aminoacyl-tRNA synthetase family. In terms of assembly, monomer.

The protein resides in the cytoplasm. It carries out the reaction tRNA(Arg) + L-arginine + ATP = L-arginyl-tRNA(Arg) + AMP + diphosphate. The chain is Arginine--tRNA ligase from Bordetella bronchiseptica (strain ATCC BAA-588 / NCTC 13252 / RB50) (Alcaligenes bronchisepticus).